The primary structure comprises 264 residues: tRNA pseudouridine synthase A (264 aa).

Asp-51 (nucleophile) is an active-site residue. Tyr-109 contacts substrate.

The protein belongs to the tRNA pseudouridine synthase TruA family. Homodimer.

The catalysed reaction is uridine(38/39/40) in tRNA = pseudouridine(38/39/40) in tRNA. Formation of pseudouridine at positions 38, 39 and 40 in the anticodon stem and loop of transfer RNAs. The sequence is that of tRNA pseudouridine synthase A from Yersinia pseudotuberculosis serotype O:1b (strain IP 31758).